The primary structure comprises 169 residues: Gamma-crystallin 2 (169 aa).

2 consecutive Beta/gamma crystallin 'Greek key' domains span residues 1 to 34 and 35 to 77; these read YEDR…KVDS and GCWM…KVIP. A connecting peptide region spans residues 78 to 82; sequence QQKGP. Beta/gamma crystallin 'Greek key' domains lie at 83 to 123 and 124 to 166; these read HKMK…NVLE and GHWI…RRVL.

This sequence belongs to the beta/gamma-crystallin family. Monomer.

Functionally, crystallins are the dominant structural components of the vertebrate eye lens. The chain is Gamma-crystallin 2 from Rana temporaria (European common frog).